An 846-amino-acid polypeptide reads, in one-letter code: uncharacterized protein (846 aa).

WD repeat units follow at residues 88 to 129, 132 to 172, 175 to 215, 219 to 258, 262 to 309, and 313 to 348; these read TKHI…LLYD, EHSR…STIT, GNSE…LPFL, AHNG…KKSL, NNVS…IPYR, and CHDS…NAFN. Residues 541-560 form a disordered region; it reads PREASTPSESSNSSIESEDN. The span at 544–555 shows a compositional bias: low complexity; that stretch reads ASTPSESSNSSI. The WD 7 repeat unit spans residues 624-663; sequence FHRSSVTSASIKSREAVLSAGNSSRRASIFLDQLSLHGDT.

This is an uncharacterized protein from Schizosaccharomyces pombe (strain 972 / ATCC 24843) (Fission yeast).